Here is a 1575-residue protein sequence, read N- to C-terminus: MPHEELPSLQRPRYGSIVDDERLSAEEMDERRRQNIAYEYLCHLEEAKRWMEVCLVEELPPTTELEEGLRNGVYLAKLAKFFAPKMVSEKKIYDVEQTRYKKSGLHFRHTDNTVQWLRAMESIGLPKIFYPETTDVYDRKNIPRMIYCIHALSLYLFKLGIAPQIQDLLGKVDFTEEEISNMRKELEKYGIQMPSFSKIGGILANELSVDEAALHAAVIAINEAVEKGIAEQTVVTLRNPNAVLTLVDDNLAPEYQKELWDAKKKKEENARLKNSCISEEERDAYEELLTQAEIQGNINKVNRQAAVDHINAVIPEGDPENTLLALKKPEAQLPAVYPFAAAMYQNELFNLQKQNTMNYLAHEELLIAVEMLSAVALLNQALESNDLVSVQNQLRSPAIGLNNLDKAYVERYANTLLSVKLEVLSQGQDNLSWNEIQNCIDMVNAQIQEENDRVVAVGYINEAIDEGNPLRTLETLLLPTANISDVDPAHAQHYQDVLYHAKSQKLGDSESVSKVLWLDEIQQAVDDANVDKDRAKQWVTLVVDVNQCLEGKKSSDILSVLKSSTSNANDIIPECADKYYDALVKAKELKSERVSSDGSWLKLNLHKKYDYYYNTDSKESSWVTPESCLYKESWLTGKEIEDIIEEVTVGYIRENIWSASEELLLRFQATSSGPILREEFEARKSFLHEQEENVVKIQAFWKGYKQRKEYMHRRQTFIDNTDSIVKIQSWFRMATARKSYLSRLQYFRDHNNEIVKIQSLLRANKARDDYKTLVGSENPPLTVIRKFVYLLDQSDLDFQEELEVARLREEVVTKIRANQQLEKDLNLMDIKIGLLVKNRITLEDVISHSKKLNKKKGGEMEILNNTDNQGIKSLSKERRKTLETYQQLFYLLQTNPLYLAKLIFQMPQNKSTKFMDTVIFTLYNYASNQREEYLLLKLFKTALEEEIKSKVDQVQDIVTGNPTVIKMVVSFNRGARGQNTLRQLLAPVVKEIIDDKSLIINTNPVEVYKAWVNQLETQTGEASKLPYDVTTEQALTYPEVKNKLEASIENLRRVTDKVLNSIISSLDLLPYGLRYIAKVLKNSIHEKFPDATEDELLKIVGNLLYYRYMNPAIVAPDGFDIIDMTAGGQINSDQRRNLGSVAKVLQHAASNKLFEGENEHLSSMNNYLSETYQEFRKYFKEACNVPEPEEKFNMDKYTDLVTVSKPVIYISIEEIISTHSLLLEHQDAIAPEKNDLLSELLGSLGEVPTVESFLGEGAVDPNDPNKANTLSQLSKTEISLVLTSKYDIEDGEAIDSRSLMIKTKKLIIDVIRNQPGNTLTEILETPATAQQEVDHATDMVSRAMIDSRTPEEMKHSQSMIEDAQLPLEQKKRKIQRNLRTLEQTGHVSSENKYQDILNEIAKDIRNQRIYRKLRKAELAKLQQTLNALNKKAAFYEEQINYYDTYIKTCLDNLKRKNTRRSIKLDGKGEPKGAKRAKPVKYTAAKLHEKGVLLDIDDLQTNQFKNVTFDIIATEDVGIFDVRSKFLGVEMEKVQLNIQDLLQMQYEGVAVMKMFDKVKVNVNLLIYLLNKKFYGK.

Phosphoserine is present on Ser-16. The Calponin-homology (CH) domain occupies 41-156 (LCHLEEAKRW…YCIHALSLYL (116 aa)). Thr-356 bears the Phosphothreonine mark. Residues 594 to 627 (VSSDGSWLKLNLHKKYDYYYNTDSKESSWVTPES) enclose the WW domain. Phosphoserine is present on residues Ser-595, Ser-599, and Ser-685. IQ domains are found at residues 690–719 (QEEN…TFID), 720–749 (NTDS…YFRD), and 750–779 (HNNE…SENP). The residue at position 716 (Thr-716) is a Phosphothreonine. Phosphothreonine is present on residues Thr-782, Thr-881, Thr-1002, and Thr-1269. One can recognise a Ras-GAP domain in the interval 933–1182 (YLLLKLFKTA…QEFRKYFKEA (250 aa)). A phosphoserine mark is found at Ser-1271, Ser-1279, Ser-1358, and Ser-1461.

As to expression, isoform 2 expression is enhanced in testis.

Its function is as follows. Binds to activated CDC42 and RAC1 but does not seem to stimulate their GTPase activity. Associates with calmodulin. This chain is Ras GTPase-activating-like protein IQGAP2 (IQGAP2), found in Homo sapiens (Human).